A 143-amino-acid chain; its full sequence is Large ribosomal subunit protein uL11 (143 aa).

Belongs to the universal ribosomal protein uL11 family. In terms of assembly, part of the ribosomal stalk of the 50S ribosomal subunit. Interacts with L10 and the large rRNA to form the base of the stalk. L10 forms an elongated spine to which L12 dimers bind in a sequential fashion forming a multimeric L10(L12)X complex. In terms of processing, one or more lysine residues are methylated.

Forms part of the ribosomal stalk which helps the ribosome interact with GTP-bound translation factors. This is Large ribosomal subunit protein uL11 from Zymomonas mobilis subsp. mobilis (strain ATCC 31821 / ZM4 / CP4).